Consider the following 476-residue polypeptide: Probable cytosol aminopeptidase (476 aa).

K242 and D247 together coordinate Mn(2+). Residue K254 is part of the active site. Mn(2+) contacts are provided by D265, D324, and E326. R328 is an active-site residue.

The protein belongs to the peptidase M17 family. Mn(2+) is required as a cofactor.

The protein localises to the cytoplasm. It catalyses the reaction Release of an N-terminal amino acid, Xaa-|-Yaa-, in which Xaa is preferably Leu, but may be other amino acids including Pro although not Arg or Lys, and Yaa may be Pro. Amino acid amides and methyl esters are also readily hydrolyzed, but rates on arylamides are exceedingly low.. The catalysed reaction is Release of an N-terminal amino acid, preferentially leucine, but not glutamic or aspartic acids.. Its function is as follows. Presumably involved in the processing and regular turnover of intracellular proteins. Catalyzes the removal of unsubstituted N-terminal amino acids from various peptides. The protein is Probable cytosol aminopeptidase of Treponema denticola (strain ATCC 35405 / DSM 14222 / CIP 103919 / JCM 8153 / KCTC 15104).